Consider the following 585-residue polypeptide: Isocitrate dehydrogenase kinase/phosphatase (585 aa).

ATP-binding positions include 315–321 (APGVKGM) and Lys-336. Asp-371 is a catalytic residue.

The protein belongs to the AceK family.

The protein resides in the cytoplasm. It catalyses the reaction L-seryl-[isocitrate dehydrogenase] + ATP = O-phospho-L-seryl-[isocitrate dehydrogenase] + ADP + H(+). In terms of biological role, bifunctional enzyme which can phosphorylate or dephosphorylate isocitrate dehydrogenase (IDH) on a specific serine residue. This is a regulatory mechanism which enables bacteria to bypass the Krebs cycle via the glyoxylate shunt in response to the source of carbon. When bacteria are grown on glucose, IDH is fully active and unphosphorylated, but when grown on acetate or ethanol, the activity of IDH declines drastically concomitant with its phosphorylation. The polypeptide is Isocitrate dehydrogenase kinase/phosphatase (Photorhabdus laumondii subsp. laumondii (strain DSM 15139 / CIP 105565 / TT01) (Photorhabdus luminescens subsp. laumondii)).